The sequence spans 360 residues: Phospho-N-acetylmuramoyl-pentapeptide-transferase (360 aa).

Transmembrane regions (helical) follow at residues 27–47, 70–90, 98–118, 134–154, 168–188, 199–219, 239–259, 263–283, 288–308, and 337–357; these read GALF…ISLL, GTPT…ILLW, VWVT…DDYL, LLLE…YSPA, ALLN…VGAG, GLAI…AYLV, LAVV…FNAP, IFMG…IAVA, IVLA…IIQV, and QVVI…LATL.

It belongs to the glycosyltransferase 4 family. MraY subfamily. Requires Mg(2+) as cofactor.

It localises to the cell inner membrane. It carries out the reaction UDP-N-acetyl-alpha-D-muramoyl-L-alanyl-gamma-D-glutamyl-meso-2,6-diaminopimeloyl-D-alanyl-D-alanine + di-trans,octa-cis-undecaprenyl phosphate = di-trans,octa-cis-undecaprenyl diphospho-N-acetyl-alpha-D-muramoyl-L-alanyl-D-glutamyl-meso-2,6-diaminopimeloyl-D-alanyl-D-alanine + UMP. Its pathway is cell wall biogenesis; peptidoglycan biosynthesis. Its function is as follows. Catalyzes the initial step of the lipid cycle reactions in the biosynthesis of the cell wall peptidoglycan: transfers peptidoglycan precursor phospho-MurNAc-pentapeptide from UDP-MurNAc-pentapeptide onto the lipid carrier undecaprenyl phosphate, yielding undecaprenyl-pyrophosphoryl-MurNAc-pentapeptide, known as lipid I. The sequence is that of Phospho-N-acetylmuramoyl-pentapeptide-transferase from Methylorubrum populi (strain ATCC BAA-705 / NCIMB 13946 / BJ001) (Methylobacterium populi).